The following is a 430-amino-acid chain: MQIIKTTIATFTAIAFTGAASFTSAEVVPLDRVVAVVDNRAITQTELDSRVQDVQVRSQAAGMRLPEADILNKQIIDQLISETLQLEMADRYGVQVSDQEVNASIGNIIQNAQMTEQQFVQQLASEGVSINEFRASIRRQLTMRSITEGLVSRRIRISEQEVDNFLKSADAQFWVSPDYHLGHILVALPSSPSSEAIVEAEEKANALYEKLKAGANFAEVAIAESNGPSALQGGDLGWRKSAELPTLFAELLPSLNNGDVTKPTRSQAGFHIIKLYESRGGQKQIVNQTRARHILVKTSEILNDAKAEAKLKDIRQQILDGADFAELAKTHSEDIGSRMSGGDLGWATPGTFVPAFEKTMAETKEGEISQPFKSRFGWHIMKVEERREEDMTQEALRQKARNMIMSRRFEDETQIWLQELRDEAFIDIKI.

Positions 1–25 (MQIIKTTIATFTAIAFTGAASFTSA) are cleaved as a signal peptide. 2 PpiC domains span residues 176 to 277 (SPDY…KLYE) and 286 to 385 (VNQT…KVEE).

The protein resides in the periplasm. It catalyses the reaction [protein]-peptidylproline (omega=180) = [protein]-peptidylproline (omega=0). Its function is as follows. Chaperone involved in the correct folding and assembly of outer membrane proteins. Recognizes specific patterns of aromatic residues and the orientation of their side chains, which are found more frequently in integral outer membrane proteins. May act in both early periplasmic and late outer membrane-associated steps of protein maturation. The chain is Chaperone SurA from Saccharophagus degradans (strain 2-40 / ATCC 43961 / DSM 17024).